Here is a 565-residue protein sequence, read N- to C-terminus: Deoxyribodipyrimidine photo-lyase, mitochondrial (565 aa).

The Photolyase/cryptochrome alpha/beta domain occupies S75–I226. FAD-binding positions include Y326 and T338–S342. 2 interaction with DNA regions span residues E384–Y391 and N451–R452. D482–D484 is a binding site for FAD. Q514 is a binding site for DNA.

It belongs to the DNA photolyase class-1 family. As to quaternary structure, monomer. FAD serves as cofactor. (6R)-5,10-methylene-5,6,7,8-tetrahydrofolate is required as a cofactor.

It localises to the nucleus. The protein localises to the mitochondrion. It catalyses the reaction cyclobutadipyrimidine (in DNA) = 2 pyrimidine residues (in DNA).. Its function is as follows. Involved in repair of UV radiation-induced DNA damage. Catalyzes the light-dependent monomerization (300-600 nm) of cyclobutyl pyrimidine dimers (in cis-syn configuration), which are formed between adjacent bases on the same DNA strand upon exposure to ultraviolet radiation. The chain is Deoxyribodipyrimidine photo-lyase, mitochondrial (PHR1) from Saccharomyces cerevisiae (strain ATCC 204508 / S288c) (Baker's yeast).